A 571-amino-acid chain; its full sequence is Glutamate--tRNA ligase (571 aa).

Positions 110-120 (PNPNGPATLGS) match the 'HIGH' region motif.

It belongs to the class-I aminoacyl-tRNA synthetase family. Glutamate--tRNA ligase type 2 subfamily.

Its subcellular location is the cytoplasm. It carries out the reaction tRNA(Glu) + L-glutamate + ATP = L-glutamyl-tRNA(Glu) + AMP + diphosphate. In terms of biological role, catalyzes the attachment of glutamate to tRNA(Glu) in a two-step reaction: glutamate is first activated by ATP to form Glu-AMP and then transferred to the acceptor end of tRNA(Glu). The chain is Glutamate--tRNA ligase from Methanosarcina barkeri (strain Fusaro / DSM 804).